The primary structure comprises 485 residues: Cobyric acid synthase (485 aa).

In terms of domain architecture, GATase cobBQ-type spans 250-436 (RRIVACPILP…IHGLLASPAL (187 aa)). The active-site Nucleophile is the C332. H428 is an active-site residue.

It belongs to the CobB/CobQ family. CobQ subfamily.

The protein operates within cofactor biosynthesis; adenosylcobalamin biosynthesis. Functionally, catalyzes amidations at positions B, D, E, and G on adenosylcobyrinic A,C-diamide. NH(2) groups are provided by glutamine, and one molecule of ATP is hydrogenolyzed for each amidation. In Sphingopyxis alaskensis (strain DSM 13593 / LMG 18877 / RB2256) (Sphingomonas alaskensis), this protein is Cobyric acid synthase.